The following is a 379-amino-acid chain: uncharacterized protein (379 aa).

The protein belongs to the glycosyltransferase 28 family.

This is an uncharacterized protein from Methanosarcina acetivorans (strain ATCC 35395 / DSM 2834 / JCM 12185 / C2A).